The following is a 669-amino-acid chain: Histone-lysine N-methyltransferase, H3 lysine-9 specific SUVH3 (669 aa).

Disordered regions lie at residues 56-127 (YSSF…EKKT) and 270-290 (ESLI…ASDQ). Composition is skewed to polar residues over residues 65–82 (QQPT…NTPI) and 93–107 (RTPT…SSGT). Residues 108–120 (KRGVGRPKGTTSV) constitute a DNA-binding region (a.T hook). Positions 208–355 (GTVPGIEVGD…CNTFKYKLVR (148 aa)) constitute a YDG domain. Residues 430-491 (IGCSCSGSCS…SCKNRVIQTG (62 aa)) form the Pre-SET domain. The Zn(2+) site is built by Cys432, Cys434, Cys438, Cys445, Cys447, Cys473, Cys477, Cys479, and Cys483. Positions 494–638 (SRLEVFKTRN…PMAELTYDYG (145 aa)) constitute an SET domain. Residues 504-506 (RGW), Asp540, Tyr542, Arg592, and 595-596 (NH) contribute to the S-adenosyl-L-methionine site. The Zn(2+) site is built by Cys598, Cys657, Cys659, and Cys664. In terms of domain architecture, Post-SET spans 653 to 669 (GQRTCLCGSEQCRGSFG).

Belongs to the class V-like SAM-binding methyltransferase superfamily. Histone-lysine methyltransferase family. Suvar3-9 subfamily. As to expression, expressed in leaves stems and flowers.

The protein resides in the nucleus. It is found in the chromosome. Its subcellular location is the centromere. The enzyme catalyses L-lysyl(9)-[histone H3] + S-adenosyl-L-methionine = N(6)-methyl-L-lysyl(9)-[histone H3] + S-adenosyl-L-homocysteine + H(+). Its function is as follows. Histone methyltransferase. Methylates 'Lys-9' of histone H3. H3 'Lys-9' methylation represents a specific tag for epigenetic transcriptional repression. The polypeptide is Histone-lysine N-methyltransferase, H3 lysine-9 specific SUVH3 (SUVH3) (Arabidopsis thaliana (Mouse-ear cress)).